Reading from the N-terminus, the 643-residue chain is Aspartic protease 3 (643 aa).

The first 31 residues, 1–31 (MEGRTTAGRATPAGFWLFSCCLASVLWSANA), serve as a signal peptide directing secretion. Positions 87–99 (APEVSGAAGASAS) are enriched in low complexity. The segment at 87–116 (APEVSGAAGASASKTSEKPIRPYHTGPSSR) is disordered. Positions 281–600 (YVGVIGIGTP…GTRPSLVGIA (320 aa)) constitute a Peptidase A1 domain. Residues D299 and D490 contribute to the active site.

This sequence belongs to the peptidase A1 family.

Its subcellular location is the endomembrane system. Inhibited by 49c, a hydroxyethylamine scaffold-based compound. Required for the processing-mediated maturation of a subset of microneme proteins, such as MIC6, and rhoptry proteins, such as ROP1. By regulating microneme and rhoptry processing, plays an essential role in the lysis of the host cell membrane during egress and in rhoptry content discharge, which is required for invasion of host cells. The chain is Aspartic protease 3 from Toxoplasma gondii.